The following is a 1299-amino-acid chain: DNA-directed RNA polymerase subunit beta' (1299 aa).

Positions 60, 62, 75, and 78 each coordinate Zn(2+). The Mg(2+) site is built by Asp-535, Asp-537, and Asp-539. Zn(2+) is bound by residues Cys-877, Cys-954, Cys-961, and Cys-964.

It belongs to the RNA polymerase beta' chain family. The RNAP catalytic core consists of 2 alpha, 1 beta, 1 beta' and 1 omega subunit. When a sigma factor is associated with the core the holoenzyme is formed, which can initiate transcription. It depends on Mg(2+) as a cofactor. Zn(2+) is required as a cofactor.

It carries out the reaction RNA(n) + a ribonucleoside 5'-triphosphate = RNA(n+1) + diphosphate. In terms of biological role, DNA-dependent RNA polymerase catalyzes the transcription of DNA into RNA using the four ribonucleoside triphosphates as substrates. The polypeptide is DNA-directed RNA polymerase subunit beta' (Pseudarthrobacter chlorophenolicus (strain ATCC 700700 / DSM 12829 / CIP 107037 / JCM 12360 / KCTC 9906 / NCIMB 13794 / A6) (Arthrobacter chlorophenolicus)).